The following is a 430-amino-acid chain: Stress protein DDR48 (430 aa).

The segment at 1 to 430 (MGLFDKVKQF…RNQYGGDDDY (430 aa)) is disordered. Residues 12 to 27 (NSNNNNNDSGNNNQGD) show a composition bias toward low complexity. A compositionally biased stretch (basic and acidic residues) spans 37 to 60 (GEDRVNQFKSKIGEDRFDKMESKV). The span at 70-421 (NDNDSNNNDS…SYGSSNRGGR (352 aa)) shows a compositional bias: low complexity. Repeat copies occupy residues 74-81 (SNNNDSYG), 82-89 (SNNNDSYG), 90-97 (SNNNDSYG), 98-105 (SNNNDSYG), 106-113 (SNNNDSYG), and 114-121 (SNNDDSYG). Positions 74-414 (SNNNDSYGSN…GSSNNDDSYG (341 aa)) are 38 X 8 AA approximate tandem repeats of S-[NS]-N-[ND]-D-S-Y-G. The stretch at 124–131 (NKKKSSYG) is one 7; approximate repeat. Tandem repeats lie at residues 132-139 (SNNDDSYG), 141-148 (SNNNDSYG), 149-156 (SNNNDSYG), 157-164 (SNNNDSYG), and 165-172 (SNNDDSYG). Residues 175 to 182 (NKNKSSYG) form a 13; approximate repeat. Phosphoserine occurs at positions 183 and 191. Repeat copies occupy residues 183–190 (SNNDDSYG) and 191–198 (SNNDDSYG). The stretch at 201-208 (NKKKSSYG) is one 16; approximate repeat. Tandem repeats lie at residues 209-216 (SSNNDSYG), 217-224 (SNNDDSYG), 225-232 (SNNNDSYG), and 233-240 (SNNDDSYG). The 21; approximate repeat unit spans residues 243–250 (NKKKSSYG). 3 consecutive repeat copies span residues 251 to 258 (SNNDDSYG), 260 to 267 (SNNNDSYG), and 268 to 275 (SNNDDSYG). The 25; approximate repeat unit spans residues 278-285 (NKNKSSYG). Repeat copies occupy residues 287-294 (SSNDDSYG) and 296-303 (SNNDDSYG). Residues 306–313 (NKKKSSYG) form a 28; approximate repeat. Phosphoserine occurs at positions 314 and 322. 2 consecutive repeat copies span residues 314 to 321 (SNNDDSYG) and 322 to 329 (SNNDDSYG). The 31; approximate repeat unit spans residues 332–339 (NKKKSSYG). Tandem repeats lie at residues 340-347 (SSNNDSYG) and 348-355 (SNNDDSYG). Residues 358–365 (NKKKSSYG) form a 34; approximate repeat. 2 consecutive repeat copies span residues 366–373 (SNNDDSYG) and 375–382 (SNNNDSYG). One copy of the 37; approximate repeat lies at 393-400 (NRNKNSYG). Repeat unit 38 spans residues 407 to 414 (SNNDDSYG).

The protein belongs to the DDR48 family. Post-translationally, probably highly glycosylated.

Its function is as follows. DNA damage-responsive protein that may be required for maintaining the rate of spontaneous mutagenesis. Shows low ATP and GTP hydrolysis activity. Dispensable for acquisition of thermotolerance and does not play a significant role in recovery or protection of cells from acute heat shock. The chain is Stress protein DDR48 (DDR48) from Saccharomyces cerevisiae (strain ATCC 204508 / S288c) (Baker's yeast).